The sequence spans 302 residues: 4-hydroxy-tetrahydrodipicolinate synthase (302 aa).

Thr55 contacts pyruvate. Tyr144 functions as the Proton donor/acceptor in the catalytic mechanism. Lys172 functions as the Schiff-base intermediate with substrate in the catalytic mechanism. Val214 is a pyruvate binding site.

It belongs to the DapA family. As to quaternary structure, homotetramer; dimer of dimers.

The protein localises to the cytoplasm. It carries out the reaction L-aspartate 4-semialdehyde + pyruvate = (2S,4S)-4-hydroxy-2,3,4,5-tetrahydrodipicolinate + H2O + H(+). Its pathway is amino-acid biosynthesis; L-lysine biosynthesis via DAP pathway; (S)-tetrahydrodipicolinate from L-aspartate: step 3/4. Its function is as follows. Catalyzes the condensation of (S)-aspartate-beta-semialdehyde [(S)-ASA] and pyruvate to 4-hydroxy-tetrahydrodipicolinate (HTPA). The polypeptide is 4-hydroxy-tetrahydrodipicolinate synthase (Prochlorococcus marinus (strain SARG / CCMP1375 / SS120)).